The following is a 616-amino-acid chain: Coagulation factor XII (616 aa).

The first 19 residues, 1 to 19 (MRALLLLGILLVSLESALL), serve as a signal peptide directing secretion. Positions 42–90 (VTGEPCHFPFQYYRQLYYKCIQRGQRGPRPWCATTPNFEKDQRWAYCLE) constitute a Fibronectin type-II domain. Intrachain disulfides connect Cys-47-Cys-73, Cys-61-Cys-88, Cys-98-Cys-110, Cys-104-Cys-119, Cys-121-Cys-130, Cys-135-Cys-163, Cys-161-Cys-170, Cys-178-Cys-189, Cys-183-Cys-198, Cys-200-Cys-209, Cys-217-Cys-295, Cys-238-Cys-277, and Cys-266-Cys-290. Positions 94–131 (VKDHCNKGNPCQKGGTCVNMPNGPHCICPDHFTGKHCQ) constitute an EGF-like 1 domain. A glycan (O-linked (Fuc) threonine) is linked at Thr-109. The Fibronectin type-I domain maps to 133-173 (EKCFEPQFLQFFQENEIWHRFEPAGVSKCQCKGPKAQCKPV). An EGF-like 2 domain is found at 174-210 (ASQVCSTNPCLNGGSCLQTEGHRLCRCPTGYAGRLCD). The 80-residue stretch at 216–295 (RCYSDRGLSY…SWQYCRLARC (80 aa)) folds into the Kringle domain. Residues Asn-249, Asn-271, and Asn-335 are each glycosylated (N-linked (GlcNAc...) asparagine). Positions 303 to 342 (PPILTPTQSPSEHQDSPLLSREPQPTTQTPSQNLTSAWCA) are disordered. Positions 325–338 (PQPTTQTPSQNLTS) are enriched in polar residues. 7 disulfide bridges follow: Cys-358/Cys-485, Cys-396/Cys-412, Cys-404/Cys-474, Cys-435/Cys-438, Cys-501/Cys-570, Cys-533/Cys-549, and Cys-560/Cys-591. The 244-residue stretch at 372-615 (IVGGLVALPG…YLAWIQEHTT (244 aa)) folds into the Peptidase S1 domain. His-411 functions as the Charge relay system in the catalytic mechanism. Asn-432 carries an N-linked (GlcNAc...) asparagine glycan. Asp-460 (charge relay system) is an active-site residue. Ser-564 functions as the Charge relay system in the catalytic mechanism.

It belongs to the peptidase S1 family. As to quaternary structure, interacts with HRG; the interaction, which is enhanced in the presence of zinc ions and inhibited by heparin-binding, inhibits factor XII autoactivation and contact-initiated coagulation. Post-translationally, O- and N-glycosylated.

The protein localises to the secreted. The enzyme catalyses Selective cleavage of Arg-|-Ile bonds in factor VII to form factor VIIa and factor XI to form factor XIa.. With respect to regulation, activity is promoted in the presence of negatively charged surfaces. Factor XII is a serum glycoprotein that participates in the initiation of blood coagulation, fibrinolysis, and the generation of bradykinin and angiotensin. Prekallikrein is cleaved by factor XII to form kallikrein, which then cleaves factor XII first to alpha-factor XIIa and then trypsin cleaves it to beta-factor XIIa. Alpha-factor XIIa activates factor XI to factor XIa. This is Coagulation factor XII (F12) from Sus scrofa (Pig).